Consider the following 312-residue polypeptide: Ribosomal RNA small subunit methyltransferase H (312 aa).

S-adenosyl-L-methionine contacts are provided by residues 38–40 (GGH), D58, F84, D104, and Q111.

The protein belongs to the methyltransferase superfamily. RsmH family.

Its subcellular location is the cytoplasm. The enzyme catalyses cytidine(1402) in 16S rRNA + S-adenosyl-L-methionine = N(4)-methylcytidine(1402) in 16S rRNA + S-adenosyl-L-homocysteine + H(+). Its function is as follows. Specifically methylates the N4 position of cytidine in position 1402 (C1402) of 16S rRNA. This is Ribosomal RNA small subunit methyltransferase H from Alcanivorax borkumensis (strain ATCC 700651 / DSM 11573 / NCIMB 13689 / SK2).